A 348-amino-acid chain; its full sequence is D-alanine--D-alanine ligase (348 aa).

Residues 132 to 334 enclose the ATP-grasp domain; sequence KRVLESAGIP…YAELIEELVR (203 aa). 162-217 is an ATP binding site; the sequence is EAALSYPVFVKPANMGSSVGISKAESEEELRAAILLALTYDSRILIEQGVLAREIE. Residues aspartate 288, glutamate 301, and asparagine 303 each coordinate Mg(2+).

This sequence belongs to the D-alanine--D-alanine ligase family. It depends on Mg(2+) as a cofactor. Mn(2+) is required as a cofactor.

The protein resides in the cytoplasm. The catalysed reaction is 2 D-alanine + ATP = D-alanyl-D-alanine + ADP + phosphate + H(+). It functions in the pathway cell wall biogenesis; peptidoglycan biosynthesis. Cell wall formation. The chain is D-alanine--D-alanine ligase from Streptococcus equi subsp. zooepidemicus (strain H70).